The following is a 67-amino-acid chain: DNA-directed RNA polymerase subunit omega (67 aa).

It belongs to the RNA polymerase subunit omega family. In terms of assembly, the RNAP catalytic core consists of 2 alpha, 1 beta, 1 beta' and 1 omega subunit. When a sigma factor is associated with the core the holoenzyme is formed, which can initiate transcription.

It catalyses the reaction RNA(n) + a ribonucleoside 5'-triphosphate = RNA(n+1) + diphosphate. Functionally, promotes RNA polymerase assembly. Latches the N- and C-terminal regions of the beta' subunit thereby facilitating its interaction with the beta and alpha subunits. The protein is DNA-directed RNA polymerase subunit omega of Polaromonas sp. (strain JS666 / ATCC BAA-500).